Here is a 726-residue protein sequence, read N- to C-terminus: Prolyl endopeptidase-like (726 aa).

S138 bears the Phosphoserine mark. Active-site charge relay system residues include S558, D644, and H689.

This sequence belongs to the peptidase S9A family. In terms of assembly, homodimer. Interacts with the AP-1 complex.

It localises to the cytoplasm. The protein localises to the cytosol. Its subcellular location is the golgi apparatus. It is found in the trans-Golgi network. The protein resides in the cytoskeleton. It localises to the nucleus. Functionally, serine peptidase whose precise substrate specificity remains unclear. Does not cleave peptides after a arginine or lysine residue. Regulates trans-Golgi network morphology and sorting by regulating the membrane binding of the AP-1 complex. May play a role in the regulation of synaptic vesicle exocytosis. In Rattus norvegicus (Rat), this protein is Prolyl endopeptidase-like (Prepl).